The chain runs to 445 residues: Trigger factor (445 aa).

A PPIase FKBP-type domain is found at 162-247 (GDQVTIDAIG…IKAVHTAEPT (86 aa)).

It belongs to the FKBP-type PPIase family. Tig subfamily.

Its subcellular location is the cytoplasm. The enzyme catalyses [protein]-peptidylproline (omega=180) = [protein]-peptidylproline (omega=0). Involved in protein export. Acts as a chaperone by maintaining the newly synthesized protein in an open conformation. Functions as a peptidyl-prolyl cis-trans isomerase. This Rickettsia conorii (strain ATCC VR-613 / Malish 7) protein is Trigger factor.